We begin with the raw amino-acid sequence, 360 residues long: DNA replication and repair protein RecF (360 aa).

30–37 (GANGSGKT) contributes to the ATP binding site.

The protein belongs to the RecF family.

It localises to the cytoplasm. Its function is as follows. The RecF protein is involved in DNA metabolism; it is required for DNA replication and normal SOS inducibility. RecF binds preferentially to single-stranded, linear DNA. It also seems to bind ATP. The protein is DNA replication and repair protein RecF of Acinetobacter baumannii (strain SDF).